A 732-amino-acid chain; its full sequence is Small conductance calcium-activated potassium channel protein 3 (732 aa).

Residues 1–11 (MDTSGHFHDSG) show a composition bias toward basic and acidic residues. Disordered regions lie at residues 1 to 82 (MDTS…QQAP) and 119 to 161 (AILH…QASP). Residues 35–61 (QPPPPPAPPAVPQQPPGPLLQPQPPQP) are compositionally biased toward pro residues. Low complexity predominate over residues 62 to 82 (QQQQSQQQQQQQSQQQQQQAP). Residues 119 to 133 (AILHPSSRQGSQLNL) show a composition bias toward polar residues. Residues 139 to 148 (GHSPSSTATS) show a composition bias toward low complexity. A Phosphoserine modification is found at Ser-168. Residues 241–257 (THNHQHAGTTAGSTTFP) show a composition bias toward polar residues. Residues 241–260 (THNHQHAGTTAGSTTFPKAN) form a disordered region. A helical transmembrane segment spans residues 289–309 (LIFGMFGIVVMVIETELSWGL). A helical transmembrane segment spans residues 316–336 (FSLALKCLISLSTVILLGLII). Residues 367–387 (ISLEMLVCAIHPIPGEYKFFW) traverse the membrane as a helical segment. Residues 406 to 426 (IILSIPMFLRLYLIARVMLLH) form a helical membrane-spanning segment. The chain crosses the membrane as a helical span at residues 455–475 (LMTICPGTVLLVFSISLWIIA). The segment at residues 495 to 515 (FLGAMWLISITFLSIGYGDMV) is an intramembrane region (pore-forming). A helical membrane pass occupies residues 524 to 544 (VCLLTGIMGAGCTALVVAVVA). The interval 562-638 (DTQLTKRIKN…LVDLSKMQNV (77 aa)) is calmodulin-binding. Residues 643–670 (ITELNDRSEDLEKQIGSLESKLEHLTAS) are a coiled coil. Positions 704 to 732 (GTSHAPPSDSPIGISSTSFPTPYTSSSSC) are disordered. Over residues 718–732 (SSTSFPTPYTSSSSC) the composition is skewed to low complexity.

It belongs to the potassium channel KCNN family. KCa2.3/KCNN3 subfamily. Homodimer. Heteromultimer with KCNN2 or KCNN1; this modulates plasma membrane expression and consequently the small conductance calcium-activated potassium channel activity. The complex is composed of 4 channel subunits each of which binds to a calmodulin subunit which regulates the channel activity through calcium-binding. Interacts with CALM1. Expressed at low levels in atrial and ventricular myocytes (at protein level).

Its subcellular location is the cell membrane. The protein localises to the cytoplasm. It is found in the myofibril. The protein resides in the sarcomere. It localises to the z line. The enzyme catalyses K(+)(in) = K(+)(out). Inhibited by bee venom neurotoxin apamin. In terms of biological role, small conductance calcium-activated potassium channel that mediates the voltage-independent transmembrane transfer of potassium across the cell membrane through a constitutive interaction with calmodulin which binds the intracellular calcium allowing its opening. The current is characterized by a voltage-independent activation, an intracellular calcium concentration increase-dependent activation and a single-channel conductance of 10 picosiemens. Also presents an inwardly rectifying current, thus reducing its already small outward conductance of potassium ions, which is particularly the case when the membrane potential displays positive values, above + 20 mV. Activation is followed by membrane hyperpolarization. Thought to regulate neuronal excitability by contributing to the slow component of synaptic afterhyperpolarization. This Mus musculus (Mouse) protein is Small conductance calcium-activated potassium channel protein 3.